Here is a 420-residue protein sequence, read N- to C-terminus: Glucose-1-phosphate adenylyltransferase (420 aa).

Residues Tyr-107, Gly-173, 188 to 189 (EK), and Ser-206 contribute to the alpha-D-glucose 1-phosphate site.

It belongs to the bacterial/plant glucose-1-phosphate adenylyltransferase family. In terms of assembly, homotetramer.

It carries out the reaction alpha-D-glucose 1-phosphate + ATP + H(+) = ADP-alpha-D-glucose + diphosphate. It participates in glycan biosynthesis; glycogen biosynthesis. In terms of biological role, involved in the biosynthesis of ADP-glucose, a building block required for the elongation reactions to produce glycogen. Catalyzes the reaction between ATP and alpha-D-glucose 1-phosphate (G1P) to produce pyrophosphate and ADP-Glc. In Shewanella sp. (strain ANA-3), this protein is Glucose-1-phosphate adenylyltransferase.